The sequence spans 499 residues: MLHLFAGLDLHTGLLLLLALAFVLFYEAINGFHDTANAVATVIYTRAMRSQLAVVMAAVFNFLGVLLGGLSVAYAIVHMLPTDLLLNMGSSHGLAMVFSMLLAAIIWNLGTWYFGLPASSSHTLIGAIIGIGLTNALMTGTSVVDALNIPKVLSIFGSLIVSPIVGLVFAGGLIFLLRRYWSGTKKRARIHLTPAEREKKDGKKKPPFWTRIALILSAIGVAFSHGANDGQKGIGLVMLVLIGVAPAGFVVNMNATGYEITRTRDAINNVEAYFEQHPALLKQATGADQLVPAPEAGATQPAEFHCHPSNTINALNRLKGMLTTDVESYDKLSLDQRSQMRRIMLCVSDTIDKVVKMPGVSADDQRLLKKLKSDMLSTIEYAPVWIIMAVALALGIGTMIGWRRVATTIGEKIGKKGMTYAQGMSAQMTAAVSIGLASYTGMPVSTTHVLSSSVAGTMVVDGGGLQRKTVTSILMAWVFTLPAAVLLSGGLYWLSLQFL.

Residues methionine 1–leucine 4 are Periplasmic-facing. The helical transmembrane segment at phenylalanine 5–phenylalanine 25 threads the bilayer. Over tyrosine 26–glutamine 51 the chain is Cytoplasmic. Residues leucine 52–valine 72 form a helical membrane-spanning segment. The Periplasmic portion of the chain corresponds to alanine 73–glycine 93. The chain crosses the membrane as a helical span at residues leucine 94 to phenylalanine 114. Residues glycine 115 to threonine 123 are Cytoplasmic-facing. Residues leucine 124 to valine 144 form a helical membrane-spanning segment. Residues aspartate 145–serine 154 are Periplasmic-facing. Residues isoleucine 155–phenylalanine 175 traverse the membrane as a helical segment. The Cytoplasmic segment spans residues leucine 176–proline 206. A helical membrane pass occupies residues proline 207–alanine 227. Residues asparagine 228–lysine 232 lie on the Periplasmic side of the membrane. The chain crosses the membrane as a helical span at residues glycine 233–methionine 253. At asparagine 254 to tyrosine 381 the chain is on the cytoplasmic side. A helical transmembrane segment spans residues alanine 382–tryptophan 402. The Periplasmic segment spans residues arginine 403 to threonine 429. Residues alanine 430 to leucine 450 traverse the membrane as a helical segment. Residues serine 451–serine 472 lie on the Cytoplasmic side of the membrane. Residues isoleucine 473–tryptophan 493 traverse the membrane as a helical segment. At leucine 494–leucine 499 the chain is on the periplasmic side.

This sequence belongs to the inorganic phosphate transporter (PiT) (TC 2.A.20) family. Pit subfamily.

The protein resides in the cell inner membrane. It carries out the reaction phosphate(in) + H(+)(in) = phosphate(out) + H(+)(out). Functionally, low-affinity inorganic phosphate transporter. This Escherichia coli O157:H7 protein is Low-affinity inorganic phosphate transporter PitA (pitA).